The sequence spans 488 residues: Regulatory protein ViaA (488 aa).

The protein belongs to the ViaA family. In terms of assembly, homodimer. Interacts with RavA.

The protein localises to the cytoplasm. Functionally, component of the RavA-ViaA chaperone complex, which may act on the membrane to optimize the function of some of the respiratory chains. ViaA stimulates the ATPase activity of RavA. This chain is Regulatory protein ViaA, found in Yersinia enterocolitica serotype O:8 / biotype 1B (strain NCTC 13174 / 8081).